The following is a 279-amino-acid chain: UPF0276 protein SO_2008 (279 aa).

This sequence belongs to the UPF0276 family.

The sequence is that of UPF0276 protein SO_2008 from Shewanella oneidensis (strain ATCC 700550 / JCM 31522 / CIP 106686 / LMG 19005 / NCIMB 14063 / MR-1).